The sequence spans 375 residues: MKILVDENMPYAEELFRRLGDVQAVPGRPIPRDALVDADALMVRSVTKVNEALLHGTSIGFVGTATAGTDHVDDTWLRQQGIGFSAAPGCNAIAVVEYVFSALMMMAERDGFQLRDKTVGIIGVGNVGSRLNARLQALGVRTLLCDPPRADRGDNEAFWPLEKLVREADVLTFHTPLNKTGAYQSLHMADDELLAALPDGRILINACRGAVVDNAALLRALEKGKKLSVVLDVWEPEPDLSLPLLARVDIGTPHIAGYTLEGKARGTTQVFEAFSQHLGQPQSVELASLLPVPEFSHLRLNGELDEGKLKRLMHLVYDVRRDDAPLRHVAGLPGEFDRLRKHYQERREWSSLCVQCDDATSAGLLQQLGFTTQLL.

Positions 45 and 66 each coordinate substrate. NAD(+) contacts are provided by aspartate 146 and threonine 175. Arginine 208 is an active-site residue. Aspartate 232 lines the NAD(+) pocket. The active site involves glutamate 237. Catalysis depends on histidine 254, which acts as the Proton donor. Position 257 (glycine 257) interacts with NAD(+). Residue tyrosine 258 coordinates substrate.

This sequence belongs to the D-isomer specific 2-hydroxyacid dehydrogenase family. PdxB subfamily. Homodimer.

It localises to the cytoplasm. It catalyses the reaction 4-phospho-D-erythronate + NAD(+) = (R)-3-hydroxy-2-oxo-4-phosphooxybutanoate + NADH + H(+). It participates in cofactor biosynthesis; pyridoxine 5'-phosphate biosynthesis; pyridoxine 5'-phosphate from D-erythrose 4-phosphate: step 2/5. In terms of biological role, catalyzes the oxidation of erythronate-4-phosphate to 3-hydroxy-2-oxo-4-phosphonooxybutanoate. This Yersinia pseudotuberculosis serotype O:1b (strain IP 31758) protein is Erythronate-4-phosphate dehydrogenase.